We begin with the raw amino-acid sequence, 130 residues long: Fluoride-specific ion channel FluC (130 aa).

The next 4 membrane-spanning stretches (helical) occupy residues 9 to 29, 39 to 59, 71 to 91, and 104 to 124; these read LAIILGAIPGALARYYATIFL, YATFLINFSGCVGMGLVVTLA, LLLAVGFLGSYTTFSTYALEV, and VLYGLGSLGIGTIGVLLGSLI. The Na(+) site is built by Gly79 and Thr82.

This sequence belongs to the fluoride channel Fluc/FEX (TC 1.A.43) family.

It is found in the cell inner membrane. It catalyses the reaction fluoride(in) = fluoride(out). Its activity is regulated as follows. Na(+) is not transported, but it plays an essential structural role and its presence is essential for fluoride channel function. Fluoride-specific ion channel. Important for reducing fluoride concentration in the cell, thus reducing its toxicity. This Synechocystis sp. (strain ATCC 27184 / PCC 6803 / Kazusa) protein is Fluoride-specific ion channel FluC.